A 190-amino-acid polypeptide reads, in one-letter code: NADH-quinone oxidoreductase subunit C (190 aa).

Belongs to the complex I 30 kDa subunit family. As to quaternary structure, NDH-1 is composed of 14 different subunits. Subunits NuoB, C, D, E, F, and G constitute the peripheral sector of the complex.

It localises to the cell membrane. The enzyme catalyses a quinone + NADH + 5 H(+)(in) = a quinol + NAD(+) + 4 H(+)(out). Functionally, NDH-1 shuttles electrons from NADH, via FMN and iron-sulfur (Fe-S) centers, to quinones in the respiratory chain. The immediate electron acceptor for the enzyme in this species is believed to be ubiquinone. Couples the redox reaction to proton translocation (for every two electrons transferred, four hydrogen ions are translocated across the cytoplasmic membrane), and thus conserves the redox energy in a proton gradient. This chain is NADH-quinone oxidoreductase subunit C, found in Wolbachia sp. subsp. Brugia malayi (strain TRS).